A 797-amino-acid polypeptide reads, in one-letter code: Protocadherin beta-9 (797 aa).

An N-terminal signal peptide occupies residues 1–26 (MKTRGFSFPRQRQVLFLFLFWGVSLA). Topologically, residues 27–690 (GSGFGRYSVT…AQADSLTVYL (664 aa)) are extracellular. Cadherin domains are found at residues 35–133 (VTEE…SPVF), 138–242 (MVLK…APQF), 247–347 (YETQ…PPEL), 352–451 (LSNS…APAF), and 456–561 (YTLF…SPFV). Asn169 carries an N-linked (GlcNAc...) asparagine glycan. N-linked (GlcNAc...) asparagine glycosylation occurs at Asn418. An N-linked (GlcNAc...) asparagine glycan is attached at Asn567. One can recognise a Cadherin 6 domain in the interval 568-671 (GSAPCTELVP…LVDGFSQPYL (104 aa)). The helical transmembrane segment at 691–711 (VVALASVSSLFLLSVLLFVAV) threads the bilayer. The Cytoplasmic portion of the chain corresponds to 712–797 (RLCRRSRAAS…TLHNSFGFNY (86 aa)).

It localises to the cell membrane. Functionally, potential calcium-dependent cell-adhesion protein. May be involved in the establishment and maintenance of specific neuronal connections in the brain. The chain is Protocadherin beta-9 (PCDHB9) from Pan troglodytes (Chimpanzee).